The chain runs to 248 residues: 5'-nucleotidase SurE (248 aa).

Residues D8, D9, S39, and N91 each contribute to the a divalent metal cation site.

The protein belongs to the SurE nucleotidase family. The cofactor is a divalent metal cation.

It localises to the cytoplasm. The catalysed reaction is a ribonucleoside 5'-phosphate + H2O = a ribonucleoside + phosphate. Functionally, nucleotidase that shows phosphatase activity on nucleoside 5'-monophosphates. The sequence is that of 5'-nucleotidase SurE from Neisseria meningitidis serogroup C (strain 053442).